The primary structure comprises 191 residues: Stress response regulator protein 1 (191 aa).

The Response regulatory domain occupies serine 62 to glutamine 181. A 4-aspartylphosphate modification is found at aspartate 114.

Functionally, required for stress adaptation, morphogenesis and virulence. The sequence is that of Stress response regulator protein 1 (SRR1) from Clavispora lusitaniae (strain ATCC 42720) (Yeast).